The sequence spans 146 residues: Large ribosomal subunit protein uL13 (146 aa).

A disordered region spans residues 125–146 (YAGPKHPHAAQQPKVYEPRPRG).

Belongs to the universal ribosomal protein uL13 family. Part of the 50S ribosomal subunit.

Its function is as follows. This protein is one of the early assembly proteins of the 50S ribosomal subunit, although it is not seen to bind rRNA by itself. It is important during the early stages of 50S assembly. This is Large ribosomal subunit protein uL13 from Roseiflexus sp. (strain RS-1).